The sequence spans 110 residues: U1-lycotoxin-Ls1ee (110 aa).

An N-terminal signal peptide occupies residues 1–20 (MKFVLLFGVLLVTLFSYSSA). A propeptide spanning residues 21–44 (EMLDDFDQADEDELLSLIEKEEAR) is cleaved from the precursor. Intrachain disulfides connect Cys47–Cys62, Cys54–Cys71, Cys61–Cys89, and Cys73–Cys87.

The protein belongs to the neurotoxin 19 (CSTX) family. 03 subfamily. As to expression, expressed by the venom gland.

It localises to the secreted. The chain is U1-lycotoxin-Ls1ee from Lycosa singoriensis (Wolf spider).